The chain runs to 290 residues: 2-hydroxy-6-oxo-6-(2'-aminophenyl)hexa-2,4-dienoic acid hydrolase (290 aa).

Active-site residues include S114, D233, and H261.

Belongs to the DmpD/TodF/XylF esterase family. As to quaternary structure, homodimer.

The enzyme catalyses (2E,4E)-6-(2-aminophenyl)-2-hydroxy-6-oxohexa-2,4-dienoate + H2O = (2E)-2-hydroxypenta-2,4-dienoate + anthranilate + H(+). It participates in xenobiotic degradation; carbazole degradation. In terms of biological role, involved in the degradation of carbazole, a toxic N-heterocyclic aromatic compound containing dibenzopyrrole system. Catalyzes the hydrolytic cleavage of a carbon-carbon bond of 2-hydroxy-6-oxo-6-(2'-aminophenyl)hexa-2,4-dienoic acid (HOPDA) to yield anthranilate. CarC is specific for 2-hydroxy-6-oxo-6-phenylhexa-2,4-dienoic acid (6-phenyl-HODA), and has little activity toward 2-hydroxy-6-oxohepta-2,4-dienoic acid and 2-hydroxymuconic semialdehyde. The effect of the presence of an amino group or hydroxyl group at the 2'-position of phenyl moiety of 6-phenyl-HODA on the enzyme activity is found to be small. The polypeptide is 2-hydroxy-6-oxo-6-(2'-aminophenyl)hexa-2,4-dienoic acid hydrolase (carC) (Metapseudomonas resinovorans (Pseudomonas resinovorans)).